The sequence spans 635 residues: Chaperone protein HtpG (635 aa).

The interval 1–336 (MTTAEAAAPE…SADLPLNLSR (336 aa)) is a; substrate-binding. The interval 337-556 (EMLQDSAILA…ESGIDRRLEK (220 aa)) is b. Residues 557 to 635 (LLASAGRLGD…RVMQRGLPTA (79 aa)) form a c region.

The protein belongs to the heat shock protein 90 family. Homodimer.

The protein resides in the cytoplasm. In terms of biological role, molecular chaperone. Has ATPase activity. In Azorhizobium caulinodans (strain ATCC 43989 / DSM 5975 / JCM 20966 / LMG 6465 / NBRC 14845 / NCIMB 13405 / ORS 571), this protein is Chaperone protein HtpG.